The following is a 493-amino-acid chain: Gamma-aminobutyric acid receptor subunit alpha-3 (493 aa).

The N-terminal stretch at 1–28 (MITTQMWHFYVTRVGLLLLISILPGTTG) is a signal peptide. The tract at residues 27–54 (TGQGESRRQEPGDFVKQDIGGLSPKHAP) is disordered. The Extracellular portion of the chain corresponds to 29 to 276 (QGESRRQEPG…THFHLKRKIG (248 aa)). Basic and acidic residues predominate over residues 31 to 42 (ESRRQEPGDFVK). A glycan (N-linked (GlcNAc...) asparagine) is linked at Asn-63. Arg-119 provides a ligand contact to 4-aminobutanoate. N-linked (GlcNAc...) asparagine glycosylation is found at Asn-163 and Asn-176. 4-aminobutanoate is bound at residue Thr-182. A disulfide bridge connects residues Cys-191 and Cys-205. Residue Asn-228 is glycosylated (N-linked (GlcNAc...) asparagine). The next 3 helical transmembrane spans lie at 277–298 (YFVI…VSFW), 304–325 (VPAR…SISA), and 338–359 (MDWF…FATV). Residues 360–458 (NYFTKRSWAW…TYNSVSKVDK (99 aa)) lie on the Cytoplasmic side of the membrane. Ser-427 bears the Phosphoserine mark. The residue at position 428 (Thr-428) is a Phosphothreonine. Phosphoserine occurs at positions 434 and 443. The chain crosses the membrane as a helical span at residues 459–480 (ISRIIFPVLFAIFNLVYWATYV).

It belongs to the ligand-gated ion channel (TC 1.A.9) family. Gamma-aminobutyric acid receptor (TC 1.A.9.5) subfamily. GABRA3 sub-subfamily. Heteropentamer, formed by a combination of alpha (GABRA1-6), beta (GABRB1-3), gamma (GABRG1-3), delta (GABRD), epsilon (GABRE), rho (GABRR1-3), pi (GABRP) and theta (GABRQ) chains, each subunit exhibiting distinct physiological and pharmacological properties. Binds UBQLN1. Interacts with GPHN. In terms of tissue distribution, expressed in most brain regions. Expressed in lungs, in alveolar epithelium.

It localises to the postsynaptic cell membrane. The protein localises to the cell membrane. It catalyses the reaction chloride(in) = chloride(out). Alpha subunit of the heteropentameric ligand-gated chloride channel gated by gamma-aminobutyric acid (GABA), a major inhibitory neurotransmitter in the brain. GABA-gated chloride channels, also named GABA(A) receptors (GABAAR), consist of five subunits arranged around a central pore and contain GABA active binding site(s) located at the alpha and beta subunit interface(s). When activated by GABA, GABAARs selectively allow the flow of chloride anions across the cell membrane down their electrochemical gradient. Chloride influx into the postsynaptic neuron following GABAAR opening decreases the neuron ability to generate a new action potential, thereby reducing nerve transmission. The sequence is that of Gamma-aminobutyric acid receptor subunit alpha-3 from Rattus norvegicus (Rat).